Here is a 281-residue protein sequence, read N- to C-terminus: Trypsin zeta (281 aa).

A signal peptide spans 1–23; it reads MSSSSWLGCLLAVLLSALALSQG. Residues 24 to 39 constitute a propeptide, activation peptide; that stretch reads LPLLEDLDENSFPDGR. Positions 40–279 constitute a Peptidase S1 domain; the sequence is IVGGYVTDIA…LRPWIDAVRA (240 aa). A disulfide bond links cysteine 73 and cysteine 89. Residues histidine 88 and aspartate 135 each act as charge relay system in the active site. Intrachain disulfides connect cysteine 199-cysteine 219 and cysteine 231-cysteine 255. The active-site Charge relay system is serine 235.

This sequence belongs to the peptidase S1 family.

It is found in the secreted. The protein localises to the extracellular space. It catalyses the reaction Preferential cleavage: Arg-|-Xaa, Lys-|-Xaa.. The chain is Trypsin zeta (zetaTry) from Drosophila erecta (Fruit fly).